Consider the following 329-residue polypeptide: METIHFTKVHGSQNDFFLVDEEENHITEWSDEKRANFAIKLCDRKHSLGGADGILYVTKSSEVGPIGQMRVVNSDGSIASMCGNGLRTVARYLLEKHALTDAKVETMKAILDVKKATSLGFDIPTYQVEISPVKFAAETLPMHVGVEKLFNQVIPELDAELAFSAVSVPNPHLITFVDQAVLDSNKQEKLASYLNSENPYFPDGVNVSFVKRLSDDAIYVRTFERGVGFTNACGTAMSACSLIKKMLDNDILETPLNVYNDGGRVQVTAKKDAAGEISLQLIGNATFVSKGSVRYENDVVTELTNEATDEQGQYQALVKEVKEFLKTTE.

Residues N14 and N73 each contribute to the substrate site. C82 acts as the Proton donor in catalysis. Substrate is bound by residues 83-84 (GN), N170, N206, and 224-225 (ER). Residue C233 is the Proton acceptor of the active site. Residue 234 to 235 (GT) coordinates substrate.

This sequence belongs to the diaminopimelate epimerase family. In terms of assembly, homodimer.

It localises to the cytoplasm. The enzyme catalyses (2S,6S)-2,6-diaminopimelate = meso-2,6-diaminopimelate. It functions in the pathway amino-acid biosynthesis; L-lysine biosynthesis via DAP pathway; DL-2,6-diaminopimelate from LL-2,6-diaminopimelate: step 1/1. Functionally, catalyzes the stereoinversion of LL-2,6-diaminopimelate (L,L-DAP) to meso-diaminopimelate (meso-DAP), a precursor of L-lysine and an essential component of the bacterial peptidoglycan. The sequence is that of Diaminopimelate epimerase from Listeria monocytogenes serotype 4b (strain CLIP80459).